Reading from the N-terminus, the 320-residue chain is Tyrosine recombinase XerC (320 aa).

One can recognise a Core-binding (CB) domain in the interval 14 to 104 (ADVREAVASW…SLRSFARHLE (91 aa)). A Tyr recombinase domain is found at 125–311 (RLPRPLPVAA…DSARLMSAFE (187 aa)). Catalysis depends on residues Arg-170, Lys-195, His-263, Arg-266, and His-289. The active-site O-(3'-phospho-DNA)-tyrosine intermediate is Tyr-298.

This sequence belongs to the 'phage' integrase family. XerC subfamily. As to quaternary structure, forms a cyclic heterotetrameric complex composed of two molecules of XerC and two molecules of XerD.

It is found in the cytoplasm. Its function is as follows. Site-specific tyrosine recombinase, which acts by catalyzing the cutting and rejoining of the recombining DNA molecules. The XerC-XerD complex is essential to convert dimers of the bacterial chromosome into monomers to permit their segregation at cell division. It also contributes to the segregational stability of plasmids. The polypeptide is Tyrosine recombinase XerC (Methylobacterium sp. (strain 4-46)).